The sequence spans 942 residues: Isoleucine--tRNA ligase (942 aa).

The 'HIGH' region signature appears at Pro-58–His-68. Glu-566 contributes to the L-isoleucyl-5'-AMP binding site. Positions Lys-607 to Ser-611 match the 'KMSKS' region motif. ATP is bound at residue Lys-610. 4 residues coordinate Zn(2+): Cys-905, Cys-908, Cys-925, and Cys-928.

It belongs to the class-I aminoacyl-tRNA synthetase family. IleS type 1 subfamily. As to quaternary structure, monomer. The cofactor is Zn(2+).

It is found in the cytoplasm. The catalysed reaction is tRNA(Ile) + L-isoleucine + ATP = L-isoleucyl-tRNA(Ile) + AMP + diphosphate. In terms of biological role, catalyzes the attachment of isoleucine to tRNA(Ile). As IleRS can inadvertently accommodate and process structurally similar amino acids such as valine, to avoid such errors it has two additional distinct tRNA(Ile)-dependent editing activities. One activity is designated as 'pretransfer' editing and involves the hydrolysis of activated Val-AMP. The other activity is designated 'posttransfer' editing and involves deacylation of mischarged Val-tRNA(Ile). In Pseudoalteromonas atlantica (strain T6c / ATCC BAA-1087), this protein is Isoleucine--tRNA ligase.